The chain runs to 157 residues: Arginine repressor (157 aa).

The protein belongs to the ArgR family.

Its subcellular location is the cytoplasm. It participates in amino-acid biosynthesis; L-arginine biosynthesis [regulation]. Functionally, regulates arginine biosynthesis genes. The polypeptide is Arginine repressor (Deinococcus deserti (strain DSM 17065 / CIP 109153 / LMG 22923 / VCD115)).